Consider the following 517-residue polypeptide: tRNA-2-methylthio-N(6)-dimethylallyladenosine synthase (517 aa).

An MTTase N-terminal domain is found at 18-137 (RTYQVRTYGC…LPTLLDRARH (120 aa)). Residues C27, C66, C100, C174, C178, and C181 each coordinate [4Fe-4S] cluster. One can recognise a Radical SAM core domain in the interval 160–397 (RESDYAAWVS…ELQEQICMEE (238 aa)). In terms of domain architecture, TRAM spans 399 to 470 (RVLIGRIVEL…PHHLIADAGI (72 aa)).

This sequence belongs to the methylthiotransferase family. MiaB subfamily. In terms of assembly, monomer. Requires [4Fe-4S] cluster as cofactor.

It localises to the cytoplasm. It carries out the reaction N(6)-dimethylallyladenosine(37) in tRNA + (sulfur carrier)-SH + AH2 + 2 S-adenosyl-L-methionine = 2-methylsulfanyl-N(6)-dimethylallyladenosine(37) in tRNA + (sulfur carrier)-H + 5'-deoxyadenosine + L-methionine + A + S-adenosyl-L-homocysteine + 2 H(+). Catalyzes the methylthiolation of N6-(dimethylallyl)adenosine (i(6)A), leading to the formation of 2-methylthio-N6-(dimethylallyl)adenosine (ms(2)i(6)A) at position 37 in tRNAs that read codons beginning with uridine. The protein is tRNA-2-methylthio-N(6)-dimethylallyladenosine synthase of Mycobacterium leprae (strain TN).